We begin with the raw amino-acid sequence, 188 residues long: Large ribosomal subunit protein uL6 (188 aa).

The protein belongs to the universal ribosomal protein uL6 family.

This chain is Large ribosomal subunit protein uL6 (RPL9), found in Tetrahymena thermophila (strain SB210).